Consider the following 426-residue polypeptide: Interferon regulatory factor 8 (426 aa).

A DNA-binding region (IRF tryptophan pentad repeat) is located at residues 7–114 (GRRLRQWLIE…EPYKVYRIVP (108 aa)).

It belongs to the IRF family. Interacts (via C-terminus) with TRIM21 (via C-terminus). Interacts with the BATF-JUNB heterodimer. Interacts with BATF (via bZIP domain); the interaction is direct. Interacts with COPS2. Interacts with SPI1. In terms of processing, ubiquitinated. Ubiquitination by TRIM21 in macrophages, a process that is strongly increased upon interferon gamma stimulation, leds to the enhanced transcriptional activity of target cytokine genes. Ubiquitination leads to its degradation by the proteasome. Sumoylated with SUMO3. Desumoylated by SENP1. As to expression, predominantly expressed in lymphoid tissues.

It is found in the nucleus. Its subcellular location is the cytoplasm. Its function is as follows. Transcription factor that specifically binds to the upstream regulatory region of type I interferon (IFN) and IFN-inducible MHC class I genes (the interferon consensus sequence (ICS)). Can both act as a transcriptional activator or repressor. Plays a negative regulatory role in cells of the immune system. Involved in CD8(+) dendritic cell differentiation by forming a complex with the BATF-JUNB heterodimer in immune cells, leading to recognition of AICE sequence (5'-TGAnTCA/GAAA-3'), an immune-specific regulatory element, followed by cooperative binding of BATF and IRF8 and activation of genes. Required for the development of plasmacytoid dendritic cells (pDCs), which produce most of the type I IFN in response to viral infection. Positively regulates macroautophagy in dendritic cells. Acts as a transcriptional repressor of osteoclast differentiation factors such as NFATC1 and EEIG1. The chain is Interferon regulatory factor 8 from Homo sapiens (Human).